A 210-amino-acid polypeptide reads, in one-letter code: ATP phosphoribosyltransferase (210 aa).

The protein belongs to the ATP phosphoribosyltransferase family. Short subfamily. As to quaternary structure, heteromultimer composed of HisG and HisZ subunits.

It is found in the cytoplasm. The catalysed reaction is 1-(5-phospho-beta-D-ribosyl)-ATP + diphosphate = 5-phospho-alpha-D-ribose 1-diphosphate + ATP. The protein operates within amino-acid biosynthesis; L-histidine biosynthesis; L-histidine from 5-phospho-alpha-D-ribose 1-diphosphate: step 1/9. Catalyzes the condensation of ATP and 5-phosphoribose 1-diphosphate to form N'-(5'-phosphoribosyl)-ATP (PR-ATP). Has a crucial role in the pathway because the rate of histidine biosynthesis seems to be controlled primarily by regulation of HisG enzymatic activity. The sequence is that of ATP phosphoribosyltransferase from Picosynechococcus sp. (strain ATCC 27264 / PCC 7002 / PR-6) (Agmenellum quadruplicatum).